A 196-amino-acid polypeptide reads, in one-letter code: Large ribosomal subunit protein eL15 (196 aa).

The tract at residues 155-196 is disordered; the sequence is THRGRAERGLTSAGKKGRGQRRKGKGTEKNYPSVQAHDRRGK. A compositionally biased stretch (basic residues) spans 169-178; the sequence is KKGRGQRRKG.

It belongs to the eukaryotic ribosomal protein eL15 family.

The chain is Large ribosomal subunit protein eL15 from Methanocella arvoryzae (strain DSM 22066 / NBRC 105507 / MRE50).